We begin with the raw amino-acid sequence, 512 residues long: Tyrosine-protein kinase Lyn (512 aa).

The tract at residues 1 to 62 is disordered; that stretch reads MGCIKSKGKD…GQRFQTKDPE (62 aa). Residue glycine 2 is the site of N-myristoyl glycine attachment. The S-palmitoyl cysteine moiety is linked to residue cysteine 3. A phosphoserine mark is found at serine 11 and serine 13. The SH3 domain maps to 63 to 123; sequence EQGDIVVALY…PSNYVAKLNT (61 aa). Residues 129-226 form the SH2 domain; sequence WFFKDITRKD…GLCRRLEKAC (98 aa). Tyrosine 193 carries the phosphotyrosine modification. Serine 228 is modified (phosphoserine). The 255-residue stretch at 247–501 folds into the Protein kinase domain; the sequence is IKLVKRLGAG…YLQSVLDDFY (255 aa). ATP is bound by residues 253-261 and lysine 275; that span reads LGAGQFGEV. Phosphotyrosine occurs at positions 306 and 316. Aspartate 367 (proton acceptor) is an active-site residue. Tyrosine 397 is subject to Phosphotyrosine; by autocatalysis. Phosphotyrosine is present on residues tyrosine 460 and tyrosine 473. Tyrosine 508 carries the phosphotyrosine; by autocatalysis, CSK and MATK modification.

This sequence belongs to the protein kinase superfamily. Tyr protein kinase family. SRC subfamily. Interacts with TEC. Interacts (via SH2 domain) with FLT3 (tyrosine phosphorylated). Interacts with LIME1 and with CD79A upon activation of the B-cell antigen receptor. Interacts with the B-cell receptor complex. Interacts with phosphorylated THEMIS2. Interacts with EPOR. Interacts with MS4A2/FCER1B. Interaction (via the SH2 and SH3 domains) with MUC1 is stimulated by IL7 and the subsequent phosphorylation increases the binding between MUC1 and CTNNB1/beta-catenin. Interacts with ADAM15. Interacts with NDFIP2 and more weakly with NDFIP1. Interacts with FASLG. Interacts with KIT. Interacts with HCLS1. Interacts with FCGR2B. Interacts with FCGR1A; the interaction may be indirect. Interacts with CD19, CD22, CD79A and CD79B. Interacts (via SH3 domain) with CBLC, PPP1R15A and PDE4A. Interacts with TGFB1I1. Interacts (via SH3 domain) with PIK3R1, the regulatory subunit of phosphatidylinositol 3-kinase; this interaction enhances phosphatidylinositol 3-kinase activity. Interacts with CSF2RB, the common subunit of the IL3, IL5 and CSF2 receptors. Interacts with PAG1; identified in a complex with PAG1 and STAT3. Interacts with ABL1. Interacts with PTPN6/SHP-1. Interacts (via SH3 domain) with SCIMP (via proline-rich region). This interaction facilitates the phosphorylation of SCIMP on 'Tyr-107', which enhances binding of SCIMP to TLR4, and consequently the phosphorylation of TLR4 in response to stimulation by lipopolysaccharide in macrophages. Interacts with LPXN (via LD motif 3) and the interaction is induced upon B-cell antigen receptor (BCR) activation. Interacts (via SH3-domain) with ANKRD54 (via ankyrin repeat region) in an activation-independent status of LYN. Forms a multiprotein complex with ANKRD54 and HCLS1. Interacts (via SH2 and SH3 domains) with UNC119; leading to LYN activation. Interacts with CD36. Interacts with LYN. Interacts with SKAP1 and FYB1; this interaction promotes the phosphorylation of CLNK. Interacts with BCAR1/CAS and NEDD9/HEF1. As to quaternary structure, (Microbial infection) Interacts with Epstein-Barr virus LMP2A. In terms of assembly, (Microbial infection) Interacts with Herpes virus saimiri tyrosine kinase interacting protein (Tip). Post-translationally, ubiquitinated by CBL, leading to its degradation. Ubiquitination is SH3-dependent. In terms of processing, autophosphorylated. Phosphorylated on tyrosine residues in response to KIT signaling. Phosphorylation at Tyr-397 is required for optimal activity. Phosphorylation at Tyr-508 inhibits kinase activity. Phosphorylated at Tyr-508 by CSK. Dephosphorylated by PTPRC/CD45. Becomes rapidly phosphorylated upon activation of the B-cell receptor and the immunoglobulin receptor FCGR1A. Phosphorylated in response to ITGB1 in B-cells. In terms of tissue distribution, detected in monocytes (at protein level). Detected in placenta, and in fetal brain, lung, liver and kidney. Widely expressed in a variety of organs, tissues, and cell types such as epidermoid, hematopoietic, and neuronal cells. Expressed in primary neuroblastoma tumors.

The protein localises to the cell membrane. The protein resides in the nucleus. Its subcellular location is the cytoplasm. It localises to the perinuclear region. It is found in the golgi apparatus. The protein localises to the membrane. It carries out the reaction L-tyrosyl-[protein] + ATP = O-phospho-L-tyrosyl-[protein] + ADP + H(+). With respect to regulation, subject to autoinhibition, mediated by intramolecular interactions between the SH2 domain and the C-terminal phosphotyrosine. Phosphorylation at Tyr-397 is required for optimal activity. Phosphorylated by CSK at Tyr-508; phosphorylation at Tyr-508 inhibits kinase activity. Kinase activity is modulated by dephosphorylation by PTPRC/CD45. Inhibited by Dasatinib, PP2, and SU6656. In terms of biological role, non-receptor tyrosine-protein kinase that transmits signals from cell surface receptors and plays an important role in the regulation of innate and adaptive immune responses, hematopoiesis, responses to growth factors and cytokines, integrin signaling, but also responses to DNA damage and genotoxic agents. Functions primarily as negative regulator, but can also function as activator, depending on the context. Required for the initiation of the B-cell response, but also for its down-regulation and termination. Plays an important role in the regulation of B-cell differentiation, proliferation, survival and apoptosis, and is important for immune self-tolerance. Acts downstream of several immune receptors, including the B-cell receptor, CD79A, CD79B, CD5, CD19, CD22, FCER1, FCGR2, FCGR1A, TLR2 and TLR4. Plays a role in the inflammatory response to bacterial lipopolysaccharide. Mediates the responses to cytokines and growth factors in hematopoietic progenitors, platelets, erythrocytes, and in mature myeloid cells, such as dendritic cells, neutrophils and eosinophils. Acts downstream of EPOR, KIT, MPL, the chemokine receptor CXCR4, as well as the receptors for IL3, IL5 and CSF2. Plays an important role in integrin signaling. Regulates cell proliferation, survival, differentiation, migration, adhesion, degranulation, and cytokine release. Involved in the regulation of endothelial activation, neutrophil adhesion and transendothelial migration. Down-regulates signaling pathways by phosphorylation of immunoreceptor tyrosine-based inhibitory motifs (ITIM), that then serve as binding sites for phosphatases, such as PTPN6/SHP-1, PTPN11/SHP-2 and INPP5D/SHIP-1, that modulate signaling by dephosphorylation of kinases and their substrates. Phosphorylates LIME1 in response to CD22 activation. Phosphorylates BTK, CBL, CD5, CD19, CD72, CD79A, CD79B, CSF2RB, DOK1, HCLS1, LILRB3/PIR-B, MS4A2/FCER1B, SYK and TEC. Promotes phosphorylation of SIRPA, PTPN6/SHP-1, PTPN11/SHP-2 and INPP5D/SHIP-1. Mediates phosphorylation of the BCR-ABL fusion protein. Required for rapid phosphorylation of FER in response to FCER1 activation. Mediates KIT phosphorylation. Acts as an effector of EPOR (erythropoietin receptor) in controlling KIT expression and may play a role in erythroid differentiation during the switch between proliferation and maturation. Depending on the context, activates or inhibits several signaling cascades. Regulates phosphatidylinositol 3-kinase activity and AKT1 activation. Regulates activation of the MAP kinase signaling cascade, including activation of MAP2K1/MEK1, MAPK1/ERK2, MAPK3/ERK1, MAPK8/JNK1 and MAPK9/JNK2. Mediates activation of STAT5A and/or STAT5B. Phosphorylates LPXN on 'Tyr-72'. Kinase activity facilitates TLR4-TLR6 heterodimerization and signal initiation. Phosphorylates SCIMP on 'Tyr-107'; this enhances binding of SCIMP to TLR4, promoting the phosphorylation of TLR4, and a selective cytokine response to lipopolysaccharide in macrophages. Phosphorylates CLNK. Phosphorylates BCAR1/CAS and NEDD9/HEF1. The sequence is that of Tyrosine-protein kinase Lyn (LYN) from Homo sapiens (Human).